Reading from the N-terminus, the 518-residue chain is Cytochrome P450 26C1 (518 aa).

The helical transmembrane segment at 293 to 313 threads the bilayer; sequence LLFAAFFTTASASTSLILLLL. C455 lines the heme pocket.

The protein belongs to the cytochrome P450 family. Heme serves as cofactor.

The protein resides in the membrane. The enzyme catalyses an organic molecule + reduced [NADPH--hemoprotein reductase] + O2 = an alcohol + oxidized [NADPH--hemoprotein reductase] + H2O + H(+). It carries out the reaction all-trans-retinoate + reduced [NADPH--hemoprotein reductase] + O2 = all-trans-4-hydroxyretinoate + oxidized [NADPH--hemoprotein reductase] + H2O + H(+). The catalysed reaction is all-trans-4-hydroxyretinoate + reduced [NADPH--hemoprotein reductase] + O2 = all-trans-4-oxoretinoate + oxidized [NADPH--hemoprotein reductase] + 2 H2O + H(+). It catalyses the reaction 9-cis-retinoate + reduced [NADPH--hemoprotein reductase] + O2 = 9-cis-4-hydroxyretinoate + oxidized [NADPH--hemoprotein reductase] + H2O + H(+). The enzyme catalyses 9-cis-4-hydroxyretinoate + reduced [NADPH--hemoprotein reductase] + O2 = 9-cis-4-oxoretinoate + oxidized [NADPH--hemoprotein reductase] + 2 H2O + H(+). It carries out the reaction all-trans-4-hydroxy-13,14-dihydroretinoate + reduced [NADPH--hemoprotein reductase] + O2 = all-trans-4-oxo-13,14-dihydroretinoate + oxidized [NADPH--hemoprotein reductase] + 2 H2O + H(+). The catalysed reaction is all-trans-13,14-dihydroretinoate + reduced [NADPH--hemoprotein reductase] + O2 = all-trans-4-hydroxy-13,14-dihydroretinoate + oxidized [NADPH--hemoprotein reductase] + H2O + H(+). A cytochrome P450 monooxygenase involved in the metabolism of retinoates (RAs), the active metabolites of vitamin A, and critical signaling molecules in animals. RAs exist as at least four different isomers: all-trans-RA (atRA), 9-cis-RA, 13-cis-RA, and 9,13-dicis-RA, where atRA is considered to be the biologically active isomer, although 9-cis-RA and 13-cis-RA also have activity. Catalyzes the oxidation of atRA primarily at C-4. Oxidation of atRA limits its biological activity and initiates a degradative process leading to its eventual elimination, thereby contributes to the regulation of atRA homeostasis and signaling. Able to metabolize other RAs such as 9-cis with high efficiency. Can oxidize all-trans-13,14-dihydroretinoate (DRA) to metabolites which could include all-trans-4-oxo-DRA, all-trans-4-hydroxy-DRA, all-trans-5,8-epoxy-DRA, and all-trans-18-hydroxy-DRA. Shares sequence similarity with other CYP26 family members, but has higher affinity to 9-cis-RA and is much less sensitive to the inhibitory effects of ketoconazole. In cooperation with Cyp26a1, contributes to the CNS patterning and the development of regions of higher visual acuity. In Mus musculus (Mouse), this protein is Cytochrome P450 26C1.